Reading from the N-terminus, the 238-residue chain is Splicing regulator RBM11 (238 aa).

Residues 10–87 (RTVFVGNLEA…RPINVQYRFG (78 aa)) enclose the RRM domain. A disordered region spans residues 172–238 (ALNHSPGPEA…CRKCKKKKRY (67 aa)). Residues 202–237 (NKRKRQRPDSDSDSSSEDKRGNEGSQKCRKCKKKKR) carry the Bipartite nuclear localization signal motif. Basic residues predominate over residues 228-238 (KCRKCKKKKRY).

Homodimer. As to expression, selectively expressed in brain, cerebellum and testis, and to a lower extent in kidney.

It localises to the nucleus. The protein localises to the nucleoplasm. The protein resides in the nucleus speckle. Functionally, tissue-specific splicing factor with potential implication in the regulation of alternative splicing during neuron and germ cell differentiation. Antagonizes SRSF1-mediated BCL-X splicing. May affect the choice of alternative 5' splice sites by binding to specific sequences in exons and antagonizing the SR protein SRSF1. The protein is Splicing regulator RBM11 (Rbm11) of Mus musculus (Mouse).